A 1212-amino-acid polypeptide reads, in one-letter code: Dermatan-sulfate epimerase-like protein (1212 aa).

The first 20 residues, 1-20, serve as a signal peptide directing secretion; the sequence is MALMFTGHLLFLALLMFAFS. N-linked (GlcNAc...) asparagine glycosylation is found at asparagine 28, asparagine 666, asparagine 688, and asparagine 709. 2 consecutive transmembrane segments (helical) span residues 764 to 784 and 803 to 823; these read IIFP…CISL and WILI…WSTC. A glycan (N-linked (GlcNAc...) asparagine) is linked at asparagine 874.

Belongs to the dermatan-sulfate isomerase family. As to expression, expressed in different brain areas as well as in multiple other peripheral tissues.

The protein resides in the membrane. In Homo sapiens (Human), this protein is Dermatan-sulfate epimerase-like protein (DSEL).